We begin with the raw amino-acid sequence, 483 residues long: Glutamyl-tRNA(Gln) amidotransferase subunit A (483 aa).

Residues Lys-76 and Ser-151 each act as charge relay system in the active site. The active-site Acyl-ester intermediate is the Ser-175.

Belongs to the amidase family. GatA subfamily. In terms of assembly, heterotrimer of A, B and C subunits.

It carries out the reaction L-glutamyl-tRNA(Gln) + L-glutamine + ATP + H2O = L-glutaminyl-tRNA(Gln) + L-glutamate + ADP + phosphate + H(+). Its function is as follows. Allows the formation of correctly charged Gln-tRNA(Gln) through the transamidation of misacylated Glu-tRNA(Gln) in organisms which lack glutaminyl-tRNA synthetase. The reaction takes place in the presence of glutamine and ATP through an activated gamma-phospho-Glu-tRNA(Gln). The sequence is that of Glutamyl-tRNA(Gln) amidotransferase subunit A from Coxiella burnetii (strain CbuK_Q154) (Coxiella burnetii (strain Q154)).